A 325-amino-acid polypeptide reads, in one-letter code: Putative HTH-type transcriptional regulatory protein MK1005 (325 aa).

An HTH cro/C1-type domain is found at 128–190 (VDELDVSRVR…FERRVAELLE (63 aa)). A DNA-binding region (H-T-H motif) is located at residues 139–158 (RQLRREGGRITLARAEEADV).

The polypeptide is Putative HTH-type transcriptional regulatory protein MK1005 (Methanopyrus kandleri (strain AV19 / DSM 6324 / JCM 9639 / NBRC 100938)).